We begin with the raw amino-acid sequence, 539 residues long: Phosphoenolpyruvate carboxykinase (ATP) (539 aa).

Substrate-binding residues include Arg-64, Tyr-206, and Lys-212. Residues Lys-212, His-231, and Gly-247–Thr-255 contribute to the ATP site. Mn(2+) is bound by residues Lys-212 and His-231. Mn(2+) is bound at residue Asp-268. ATP contacts are provided by residues Glu-296, Arg-332, Arg-448 to Ile-449, and Thr-454. Arg-332 contacts substrate.

It belongs to the phosphoenolpyruvate carboxykinase (ATP) family. In terms of assembly, monomer. Requires Mn(2+) as cofactor.

It is found in the cytoplasm. It catalyses the reaction oxaloacetate + ATP = phosphoenolpyruvate + ADP + CO2. It functions in the pathway carbohydrate biosynthesis; gluconeogenesis. Its function is as follows. Involved in the gluconeogenesis. Catalyzes the conversion of oxaloacetate (OAA) to phosphoenolpyruvate (PEP) through direct phosphoryl transfer between the nucleoside triphosphate and OAA. The protein is Phosphoenolpyruvate carboxykinase (ATP) of Citrobacter koseri (strain ATCC BAA-895 / CDC 4225-83 / SGSC4696).